Consider the following 702-residue polypeptide: Methionine--tRNA ligase (702 aa).

The 'HIGH' region motif lies at 14 to 24; sequence PYANGPVHLGH. Residues Cys146, Cys149, Cys159, and Cys162 each coordinate Zn(2+). The 'KMSKS' region signature appears at 344-348; sequence KFSKS. Lys347 contacts ATP. The tRNA-binding domain occupies 601–702; sequence DFQKVDLRVA…GEKINGQSVQ (102 aa).

This sequence belongs to the class-I aminoacyl-tRNA synthetase family. MetG type 1 subfamily. Homodimer. Requires Zn(2+) as cofactor.

Its subcellular location is the cytoplasm. The enzyme catalyses tRNA(Met) + L-methionine + ATP = L-methionyl-tRNA(Met) + AMP + diphosphate. Functionally, is required not only for elongation of protein synthesis but also for the initiation of all mRNA translation through initiator tRNA(fMet) aminoacylation. The sequence is that of Methionine--tRNA ligase from Chlorobium luteolum (strain DSM 273 / BCRC 81028 / 2530) (Pelodictyon luteolum).